A 609-amino-acid polypeptide reads, in one-letter code: Mitochondrial nucleoid-associated protein 1 (609 aa).

Residues 1-554 (MSDNPPRMEV…CNTTIRKSGF (554 aa)) lie on the Extracellular side of the membrane. 2 disordered regions span residues 133–163 (QEET…GESR) and 406–425 (SPEG…QASH). Residues 146–161 (TSPKRELAEDLPKSGE) are compositionally biased toward basic and acidic residues. A helical transmembrane segment spans residues 555-571 (GGITMLSTGYFVLCCSW). Over 572–609 (SFRRLKKLCRPLPWKSTVPPSVGVAKTTGDCRSKTCLD) the chain is Cytoplasmic.

The protein resides in the mitochondrion inner membrane. Its subcellular location is the mitochondrion matrix. It localises to the mitochondrion nucleoid. Its function is as follows. Critical regulator of mitochondrial DNA (mtDNA) abundance. Binds dsDNA throughout the mitochondrial genome without sequence specificity and controls mtDNA copy number by promoting its replication. Also plays important roles in mitochondrial metabolism and cell proliferation. The sequence is that of Mitochondrial nucleoid-associated protein 1 from Pongo abelii (Sumatran orangutan).